The sequence spans 98 residues: MIPTYMNIMLAFTISLLGMLTYRSHLVASLLCLEGMMMSLFIMATLMASNTHFPLINIMPIILLVFAACEAAVGLALLISISNTYGLDYIHNLNLLQC.

The next 2 membrane-spanning stretches (helical) occupy residues Leu-26 to Leu-46 and Ile-61 to Ile-81.

Belongs to the complex I subunit 4L family. In terms of assembly, core subunit of respiratory chain NADH dehydrogenase (Complex I) which is composed of 45 different subunits.

The protein resides in the mitochondrion inner membrane. The catalysed reaction is a ubiquinone + NADH + 5 H(+)(in) = a ubiquinol + NAD(+) + 4 H(+)(out). In terms of biological role, core subunit of the mitochondrial membrane respiratory chain NADH dehydrogenase (Complex I) which catalyzes electron transfer from NADH through the respiratory chain, using ubiquinone as an electron acceptor. Part of the enzyme membrane arm which is embedded in the lipid bilayer and involved in proton translocation. The sequence is that of NADH-ubiquinone oxidoreductase chain 4L (MT-ND4L) from Macaca nigrescens (Gorontalo macaque).